We begin with the raw amino-acid sequence, 362 residues long: tRNA/tmRNA (uracil-C(5))-methyltransferase (362 aa).

S-adenosyl-L-methionine-binding residues include Gln186, Tyr214, Asn219, Glu235, and Asp295. Cys320 functions as the Nucleophile in the catalytic mechanism. The active-site Proton acceptor is Glu354.

The protein belongs to the class I-like SAM-binding methyltransferase superfamily. RNA M5U methyltransferase family. TrmA subfamily.

The enzyme catalyses uridine(54) in tRNA + S-adenosyl-L-methionine = 5-methyluridine(54) in tRNA + S-adenosyl-L-homocysteine + H(+). It catalyses the reaction uridine(341) in tmRNA + S-adenosyl-L-methionine = 5-methyluridine(341) in tmRNA + S-adenosyl-L-homocysteine + H(+). Functionally, dual-specificity methyltransferase that catalyzes the formation of 5-methyluridine at position 54 (m5U54) in all tRNAs, and that of position 341 (m5U341) in tmRNA (transfer-mRNA). This chain is tRNA/tmRNA (uracil-C(5))-methyltransferase, found in Ectopseudomonas mendocina (strain ymp) (Pseudomonas mendocina).